We begin with the raw amino-acid sequence, 145 residues long: Leptin (145 aa).

C95 and C145 are disulfide-bonded.

It belongs to the leptin family.

It is found in the secreted. Its function is as follows. Key player in the regulation of energy balance and body weight control. Once released into the circulation, has central and peripheral effects by binding LEPR, found in many tissues, which results in the activation of several major signaling pathways. This is Leptin (LEP) from Meleagris gallopavo (Wild turkey).